Reading from the N-terminus, the 337-residue chain is Inositol 2-dehydrogenase (337 aa).

The protein belongs to the Gfo/Idh/MocA family. Homotetramer.

The catalysed reaction is myo-inositol + NAD(+) = scyllo-inosose + NADH + H(+). Its function is as follows. Involved in the oxidation of myo-inositol (MI) to 2-keto-myo-inositol (2KMI or 2-inosose). The chain is Inositol 2-dehydrogenase from Burkholderia cenocepacia (strain HI2424).